We begin with the raw amino-acid sequence, 220 residues long: Large ribosomal subunit protein bL25 (220 aa).

This sequence belongs to the bacterial ribosomal protein bL25 family. CTC subfamily. In terms of assembly, part of the 50S ribosomal subunit; part of the 5S rRNA/L5/L18/L25 subcomplex. Contacts the 5S rRNA. Binds to the 5S rRNA independently of L5 and L18.

This is one of the proteins that binds to the 5S RNA in the ribosome where it forms part of the central protuberance. The sequence is that of Large ribosomal subunit protein bL25 from Zymomonas mobilis subsp. mobilis (strain ATCC 31821 / ZM4 / CP4).